The following is a 199-amino-acid chain: 3-isopropylmalate dehydratase small subunit (199 aa).

It belongs to the LeuD family. LeuD type 1 subfamily. As to quaternary structure, heterodimer of LeuC and LeuD.

The enzyme catalyses (2R,3S)-3-isopropylmalate = (2S)-2-isopropylmalate. It functions in the pathway amino-acid biosynthesis; L-leucine biosynthesis; L-leucine from 3-methyl-2-oxobutanoate: step 2/4. Catalyzes the isomerization between 2-isopropylmalate and 3-isopropylmalate, via the formation of 2-isopropylmaleate. The polypeptide is 3-isopropylmalate dehydratase small subunit (Tolumonas auensis (strain DSM 9187 / NBRC 110442 / TA 4)).